We begin with the raw amino-acid sequence, 230 residues long: Capsid protein (230 aa).

Residues 19-48 (PPTSDAASPSADQPAVSSSRSDSRLVSAPL) are compositionally biased toward low complexity. The segment at 19 to 54 (PPTSDAASPSADQPAVSSSRSDSRLVSAPLPAAPPA) is disordered.

This sequence belongs to the tymoviruses capsid protein family.

It localises to the virion. Its function is as follows. Self-assembles to form a T=3 icosahedral capsid composed of 180 copies of the capsid protein. The capsid encapsulates the single-stranded RNA genome. This Grapevine fleck virus (isolate Italy/MT48) (GFkV) protein is Capsid protein.